A 428-amino-acid chain; its full sequence is BTB/POZ domain-containing protein KCTD16 (428 aa).

The region spanning 25–98 (EVVELNVGGQ…LRDRQVVLPD (74 aa)) is the BTB domain. Phosphotyrosine is present on Tyr-112. Ser-130, Ser-137, Ser-143, and Ser-146 each carry phosphoserine.

Homopentamer; forms an open pentamer. In contrast to other BTB domain-containing proteins, does not interact with CUL3. Interacts as a tetramer with GABRB1 and GABRB2.

Its subcellular location is the presynaptic cell membrane. It localises to the postsynaptic cell membrane. Its function is as follows. Auxiliary subunit of GABA-B receptors that determine the pharmacology and kinetics of the receptor response. Increases agonist potency and markedly alter the G-protein signaling of the receptors by accelerating onset and promoting desensitization. This chain is BTB/POZ domain-containing protein KCTD16 (KCTD16), found in Homo sapiens (Human).